Here is an 802-residue protein sequence, read N- to C-terminus: Nuclear polyadenylated RNA-binding protein 3 (802 aa).

Disordered regions lie at residues 1 to 174 and 252 to 293; these read MSDE…RRET and ALSV…RMRF. A compositionally biased stretch (low complexity) spans 22–34; sequence SNSNENELMNNSS. The segment covering 37 to 73 has biased composition (acidic residues); that stretch reads DGIEFDAPEEEREAEREEENEEQHELEDVNDEEEEDK. The residue at position 86 (Thr-86) is a Phosphothreonine. Acidic residues-rich tracts occupy residues 101–139 and 149–158; these read DDDD…EEGN and AAEDGEDEED. Basic and acidic residues predominate over residues 159-174; it reads KKDKTKDKEVELRRET. The segment covering 260–276 has biased composition (low complexity); it reads STISTTASASATSGARS. Residues 277-293 are compositionally biased toward basic and acidic residues; that stretch reads NDQRKPPLSDAQRRMRF. One can recognise an RRM domain in the interval 330 to 401; that stretch reads SRLFIGNLPL…KKLILEVSSS (72 aa). Residue Thr-451 is modified to Phosphothreonine. Disordered regions lie at residues 571–675 and 717–802; these read IYGA…PMDQ and MQGQ…KLQK. Over residues 575–590 the composition is skewed to pro residues; the sequence is PPLPVPNGPAVGPPPQ. Residues 593–614 show a composition bias toward low complexity; sequence YYQGYSMPPPQQQQQQPYGNYG. Over residues 632 to 642 the composition is skewed to polar residues; sequence MNQSYGRYQTS. Composition is skewed to low complexity over residues 651 to 661 and 717 to 738; these read QIPQGYGRYQA and MQGQ…MNSS. A compositionally biased stretch (polar residues) spans 745–754; that stretch reads TNYNGQNISA. The segment covering 757–769 has biased composition (pro residues); the sequence is SAPPMSHQPPPPQ. The span at 770–785 shows a compositional bias: low complexity; sequence QQQQQQQQQQQQQQQP.

The protein resides in the nucleus. It is found in the nucleoplasm. May be required for packaging pre-mRNAs into ribonucleoprotein structures amenable to efficient nuclear RNA processing. Binds to poly(A)+ RNA. Appears to act in the maintenance of CLN3 mRNA levels. This Saccharomyces cerevisiae (strain ATCC 204508 / S288c) (Baker's yeast) protein is Nuclear polyadenylated RNA-binding protein 3 (NAB3).